The chain runs to 1388 residues: MTTSELVPPPPARRSPRTRRRRQDKPALSARLVLDDHEINGDVGVLSEDLFTDLFPHLRNVPSREDGSEDIHHVAIAPWEPSPSPTETAWTVVPVLKSSALKPSTVQFSPSSLSLQSFATILQQVAPSKLSSHSRSGIEVQILDVVALSLDTVFVSLESELTKRLEQGEGTFFRDRPNKGKGKAPAQPDTPEDRLISALRVALGSLKVLHSGDLFSLPLPPHPVTHVPPNPGKIMLCEPVSQGILSDDTKIVLMRGRVHAKRGQSAPAIPPNRSLNGVPEDDEDDTANDQFYSAAEDRYKTDAATTEMDTVTETEESDLSGVDHDDDLSDDFMDDMISLQAPTLPTTASGVSTMQPGTPMTIGRGRKTNGIATPASVFSNFTATTARPDRPRGRLFKAQGLIRPILIDLLHPKPAPEDDEEARIFVDIASLSKIGCFSGDWVRVEAAEEPPANGFGAFGLGSFTSLEPTESNWRPVRVYGLPEGYSQRPVTRIPSAKHGERRMSFFESQLQKPTSPTAYISPVLLANLESPSYLRLSPIKRGTYQGKGTLPKFTSASRPPYARDITIQHVRSPVTAERAYQSAVLGGLKRYFAQKIRLVRTGDLIAVPIDTQLGKALQEQPSANGSEVDDVMALAKDESCRFDQVAWFKVGHIQTQKTDADHDQTEDLWGGVACIDSSSVAMHGSGFATSRTPATKASTWPYYLGVKKMPMKSNGASALMVPEQDQRFVSPLRRRLRELLAAATSPRAIHLKMPPVAILLTSTHRNIGKATLASEACSDIGLHTYAIDAYDILSEAGTSGGDVKTEGLLRTRSERAMSCGPDTTALLIKHVEALTADRMVSTMKEILQDTRVLVATTSDVDKVPDGVRGLFSHELEVGAPDEAEREGILRTIVEDRGINLDPEVDLNGIALKTAALVAGDLVDVVDRALVAQRLRLEQISSKTGQAVTVRDLQVAGGAMARCVTKGDFDVAVEAARKNFAGAIGAPKIPNVTWDDVGGLNNVKDAVTETIQLPLERPELFAKGMKKRSGILFYGPPGTGKTLLAKAIATEYSLNFFSVKGPELLNMYIGESEANVRRVFQRARDARPCVVFFDELDSVAPKRGNQGDSGGVMDRIVSQLLAELDGMSGGDDTSGGVFVIGATNRPDLLDPALLRPGRFDKMLYLGVSDTHDKQLKILEALTRKFTLHPSVSLHSVAQQLPFTYTGADFYALCSDAMLKAVTRQAASVDAKIRELEAQPRSRTGPISTAYFFDHHATPEDIAVMVTEEDFLAANRELVPSVSAGELSHYEQVRAMFEGPPEKDRQQQQQQQQRPSGLRAVSGSSVVSKGKGKAIAGGSGKGKGKAVATGSDDEYGSEGEVAVVNGKGKGKGKAVAGFQDGTASDDEGLY.

Disordered regions lie at residues 1–29 (MTTS…PALS), 169–192 (EGTF…DTPE), 262–287 (RGQS…DDTA), 302–323 (DAAT…SGVD), and 346–365 (TTAS…IGRG). Positions 14-23 (RSPRTRRRRQ) are enriched in basic residues. Residues 169-178 (EGTFFRDRPN) are compositionally biased toward basic and acidic residues. Residues 310–323 (TVTETEESDLSGVD) show a composition bias toward acidic residues. The span at 346 to 358 (TTASGVSTMQPGT) shows a compositional bias: polar residues. 1034–1041 (GPPGTGKT) is an ATP binding site. The interval 1297-1388 (GPPEKDRQQQ…GTASDDEGLY (92 aa)) is disordered. Residues 1319–1332 (VSGSSVVSKGKGKA) show a composition bias toward low complexity.

The protein belongs to the AAA ATPase family. Interacts with PEX1; forming the PEX1-PEX6 AAA ATPase complex, which is composed of a heterohexamer formed by a trimer of PEX1-PEX6 dimers.

The protein resides in the cytoplasm. It is found in the cytosol. It localises to the peroxisome membrane. The catalysed reaction is ATP + H2O = ADP + phosphate + H(+). Component of the PEX1-PEX6 AAA ATPase complex, a protein dislocase complex that mediates the ATP-dependent extraction of the PEX5 receptor from peroxisomal membranes, an essential step for PEX5 recycling. Specifically recognizes PEX5 monoubiquitinated at 'Cys-6', and pulls it out of the peroxisome lumen through the PEX2-PEX10-PEX12 retrotranslocation channel. Extraction by the PEX1-PEX6 AAA ATPase complex is accompanied by unfolding of the TPR repeats and release of bound cargo from PEX5. The polypeptide is Peroxisomal ATPase PEX6 (PEX6) (Colletotrichum orbiculare (strain 104-T / ATCC 96160 / CBS 514.97 / LARS 414 / MAFF 240422) (Cucumber anthracnose fungus)).